Consider the following 211-residue polypeptide: Probable GTP-binding protein EngB (211 aa).

One can recognise an EngB-type G domain in the interval Glu30 to Leu204. GTP contacts are provided by residues Gly38–Ser45, Gly64–Leu68, Asp82–Gly85, Thr149–Asp152, and Leu182–Ala185. Residues Ser45 and Thr66 each contribute to the Mg(2+) site.

It belongs to the TRAFAC class TrmE-Era-EngA-EngB-Septin-like GTPase superfamily. EngB GTPase family. Mg(2+) serves as cofactor.

Necessary for normal cell division and for the maintenance of normal septation. The chain is Probable GTP-binding protein EngB from Pseudomonas syringae pv. tomato (strain ATCC BAA-871 / DC3000).